The sequence spans 135 residues: Galectin-1 (135 aa).

Alanine 2 is modified (N-acetylalanine). One can recognise a Galectin domain in the interval 4 to 135 (GLVASNLNLK…DFKIKCVAFE (132 aa)). N6-acetyllysine occurs at positions 13 and 29. Residue serine 30 is modified to Phosphoserine. Residues 45 to 49 (HFNPR), histidine 53, asparagine 62, and 69 to 72 (WGAE) contribute to the a beta-D-galactoside site. Lysine 108 bears the N6-acetyllysine; alternate mark. Lysine 108 carries the N6-succinyllysine; alternate modification. Lysine 128 bears the N6-acetyllysine mark.

As to quaternary structure, homodimer. Binds LGALS3BP. Interacts with CD2, CD3, CD4, CD6, CD7, CD43, ALCAM and CD45. Interacts with laminin (via poly-N-acetyllactosamine). Interacts with SUSD2. Interacts with cargo receptor TMED10; the interaction mediates the translocation from the cytoplasm into the ERGIC (endoplasmic reticulum-Golgi intermediate compartment) and thereby secretion.

The protein resides in the secreted. The protein localises to the extracellular space. It localises to the extracellular matrix. Its subcellular location is the cytoplasm. Lectin that binds beta-galactoside and a wide array of complex carbohydrates. Plays a role in regulating apoptosis, cell proliferation and cell differentiation. Inhibits CD45 protein phosphatase activity and therefore the dephosphorylation of Lyn kinase. Strong inducer of T-cell apoptosis. The polypeptide is Galectin-1 (LGALS1) (Ovis aries (Sheep)).